A 274-amino-acid polypeptide reads, in one-letter code: Tropomyosin (274 aa).

Positions 1 to 30 (MKLEKDNAMDRADTLEQQNKEANIRAEKAE) are disordered. Positions 1–274 (MKLEKDNAMD…DQTFSELSGY (274 aa)) form a coiled coil.

The protein belongs to the tropomyosin family. Homodimer.

Tropomyosin, in association with the troponin complex, plays a central role in the calcium dependent regulation of muscle contraction. The protein is Tropomyosin of Panulirus stimpsoni (Chinese spiny lobster).